A 332-amino-acid chain; its full sequence is 2,3-diketo-L-gulonate reductase (332 aa).

The Proton donor role is filled by histidine 44. Residues 168 to 174 (ITMVDMS), 224 to 225 (WK), and 304 to 306 (GHE) contribute to the NAD(+) site.

Belongs to the LDH2/MDH2 oxidoreductase family. DlgD subfamily. In terms of assembly, homodimer.

The protein localises to the cytoplasm. It catalyses the reaction 3-dehydro-L-gulonate + NAD(+) = 2,3-dioxo-L-gulonate + NADH + H(+). The enzyme catalyses 3-dehydro-L-gulonate + NADP(+) = 2,3-dioxo-L-gulonate + NADPH + H(+). Functionally, catalyzes the reduction of 2,3-diketo-L-gulonate in the presence of NADH, to form 3-keto-L-gulonate. The protein is 2,3-diketo-L-gulonate reductase of Escherichia coli O81 (strain ED1a).